Reading from the N-terminus, the 275-residue chain is Lectin (275 aa).

Residues 1 to 30 form the signal peptide; sequence MASLQTQMISFYAIFLSILLTTILFFKVNS. Residues Glu149 and Asp151 each coordinate Mn(2+). Positions 151, 153, 155, and 159 each coordinate Ca(2+). Mn(2+) is bound by residues Asp159 and His166. A glycan (N-linked (GlcNAc...) asparagine) is linked at Asn217.

Belongs to the leguminous lectin family. In terms of assembly, tetramer of two alpha and two beta chains.

In terms of biological role, D-mannose specific lectin. The chain is Lectin (LECA) from Pisum sativum (Garden pea).